Reading from the N-terminus, the 260-residue chain is Adenosylcobinamide-GDP ribazoletransferase (260 aa).

The next 8 helical transmembrane spans lie at 3–23 (APLW…LPAW), 36–56 (FAPW…LVLI), 60–80 (WPTS…SGGL), 108–128 (VGAS…ASLL), 133–153 (LAPL…LWAM), 180–200 (ALPA…LMIV), 206–226 (MVLM…PELL), and 239–259 (GASV…LLPA).

This sequence belongs to the CobS family. Mg(2+) serves as cofactor.

The protein localises to the cell inner membrane. It catalyses the reaction alpha-ribazole + adenosylcob(III)inamide-GDP = adenosylcob(III)alamin + GMP + H(+). It carries out the reaction alpha-ribazole 5'-phosphate + adenosylcob(III)inamide-GDP = adenosylcob(III)alamin 5'-phosphate + GMP + H(+). The protein operates within cofactor biosynthesis; adenosylcobalamin biosynthesis; adenosylcobalamin from cob(II)yrinate a,c-diamide: step 7/7. Its function is as follows. Joins adenosylcobinamide-GDP and alpha-ribazole to generate adenosylcobalamin (Ado-cobalamin). Also synthesizes adenosylcobalamin 5'-phosphate from adenosylcobinamide-GDP and alpha-ribazole 5'-phosphate. The chain is Adenosylcobinamide-GDP ribazoletransferase from Prochlorococcus marinus (strain MIT 9313).